Reading from the N-terminus, the 374-residue chain is Chaperone protein DnaJ (374 aa).

Residues 4–68 enclose the J domain; that stretch reads DYYDILGVSR…QMRGRYDQFG (65 aa). The CR-type zinc finger occupies 133-215; sequence GGEQQIRISH…CGGRGQNQVS (83 aa). Residues Cys-146, Cys-149, Cys-163, Cys-166, Cys-189, Cys-192, Cys-203, and Cys-206 each coordinate Zn(2+). CXXCXGXG motif repeat units lie at residues 146-153, 163-170, 189-196, and 203-210; these read CKTCEGTG, CSTCQGSG, CPTCNGQG, and CDSCGGRG.

The protein belongs to the DnaJ family. Homodimer. Requires Zn(2+) as cofactor.

It is found in the cytoplasm. In terms of biological role, participates actively in the response to hyperosmotic and heat shock by preventing the aggregation of stress-denatured proteins and by disaggregating proteins, also in an autonomous, DnaK-independent fashion. Unfolded proteins bind initially to DnaJ; upon interaction with the DnaJ-bound protein, DnaK hydrolyzes its bound ATP, resulting in the formation of a stable complex. GrpE releases ADP from DnaK; ATP binding to DnaK triggers the release of the substrate protein, thus completing the reaction cycle. Several rounds of ATP-dependent interactions between DnaJ, DnaK and GrpE are required for fully efficient folding. Also involved, together with DnaK and GrpE, in the DNA replication of plasmids through activation of initiation proteins. This is Chaperone protein DnaJ from Acaryochloris marina (strain MBIC 11017).